We begin with the raw amino-acid sequence, 156 residues long: Xanthocillin biosynthesis cluster protein D (156 aa).

Residues asparagine 107 and asparagine 120 are each glycosylated (N-linked (GlcNAc...) asparagine). The helical transmembrane segment at 131–153 threads the bilayer; the sequence is IHLNAIALVATVWYGFTLSSSLL.

It localises to the membrane. It participates in secondary metabolite biosynthesis. Its function is as follows. Part of the gene cluster that mediates the biosynthesis of the isocyanide xanthocillin and its derivatives. The first step of the pathway consists in the conversion of tyrosine into a vinyl-isonitrile intermediate by the isocyanide synthase xanB. Subsequent oxidative dimerization of this intermediate to form xanthocillin may involve the cytochrome P450 monooxygenase xanG, whose expression is coregulated with that of XanB. Xanthocillin can be further modified by the isonitrile hydratase-like protein xanA which introduces N-formyl groups and the methyltransferase xanE which introduces methyl groups, leading to the production of several derivatives including fumiformamide. Finally, fumiformamide can be subject to both oxidative and reductive cyclization to yield melanocins E and F, respectively. The sequence is that of Xanthocillin biosynthesis cluster protein D from Aspergillus fumigatus (strain ATCC MYA-4609 / CBS 101355 / FGSC A1100 / Af293) (Neosartorya fumigata).